The following is a 405-amino-acid chain: Probable tRNA sulfurtransferase (405 aa).

The THUMP domain occupies 60-165 (EGVIERLRHV…QDAIYLTNQV (106 aa)). ATP-binding positions include 183–184 (ML), 208–209 (HF), Arg265, Gly287, and Gln296.

Belongs to the ThiI family.

The protein localises to the cytoplasm. It carries out the reaction [ThiI sulfur-carrier protein]-S-sulfanyl-L-cysteine + a uridine in tRNA + 2 reduced [2Fe-2S]-[ferredoxin] + ATP + H(+) = [ThiI sulfur-carrier protein]-L-cysteine + a 4-thiouridine in tRNA + 2 oxidized [2Fe-2S]-[ferredoxin] + AMP + diphosphate. The catalysed reaction is [ThiS sulfur-carrier protein]-C-terminal Gly-Gly-AMP + S-sulfanyl-L-cysteinyl-[cysteine desulfurase] + AH2 = [ThiS sulfur-carrier protein]-C-terminal-Gly-aminoethanethioate + L-cysteinyl-[cysteine desulfurase] + A + AMP + 2 H(+). The protein operates within cofactor biosynthesis; thiamine diphosphate biosynthesis. Its function is as follows. Catalyzes the ATP-dependent transfer of a sulfur to tRNA to produce 4-thiouridine in position 8 of tRNAs, which functions as a near-UV photosensor. Also catalyzes the transfer of sulfur to the sulfur carrier protein ThiS, forming ThiS-thiocarboxylate. This is a step in the synthesis of thiazole, in the thiamine biosynthesis pathway. The sulfur is donated as persulfide by IscS. The chain is Probable tRNA sulfurtransferase from Latilactobacillus sakei subsp. sakei (strain 23K) (Lactobacillus sakei subsp. sakei).